The sequence spans 211 residues: Probable endo-1,4-beta-xylanase 5 (211 aa).

Residues 1 to 16 form the signal peptide; it reads MKVTAAFASLLLTAFA. Residues 19 to 210 enclose the GH11 domain; it reads APEPVLVSRS…GAGSASVTIS (192 aa). Glu106 (nucleophile) is an active-site residue. Catalysis depends on Glu197, which acts as the Proton donor.

The protein belongs to the glycosyl hydrolase 11 (cellulase G) family.

The protein resides in the secreted. It carries out the reaction Endohydrolysis of (1-&gt;4)-beta-D-xylosidic linkages in xylans.. It functions in the pathway glycan degradation; xylan degradation. Functionally, endo-1,4-beta-xylanase involved in the hydrolysis of xylan, a major structural heterogeneous polysaccharide found in plant biomass representing the second most abundant polysaccharide in the biosphere, after cellulose. The sequence is that of Probable endo-1,4-beta-xylanase 5 (XYN5) from Aspergillus niger (strain ATCC MYA-4892 / CBS 513.88 / FGSC A1513).